Reading from the N-terminus, the 463-residue chain is FAD-dependent monooxygenase str9 (463 aa).

FAD-binding residues include Glu37, Gly50, and Arg114. The active site involves Arg200. Residue Asp334 coordinates FAD.

Belongs to the paxM FAD-dependent monooxygenase family.

Its pathway is mycotoxin biosynthesis. Its function is as follows. FAD-dependent monooxygenase; part of the gene cluster that mediates the biosynthesis of strobilurin A, an antifungal polyketide that contains a key beta-methoxyacrylate toxophore that targets the complex III of the mitochondrial electron transport chain. Strobilurin biosynthesis begins with construction of benzoyl CoA by step-wise elimination of ammonia from phenylalanine by the phenylalanine ammonia-lyase str11, oxygenation by str8 and retro-Claisen reaction to form benzoic acid, which is activated to its CoA thiolester benzoyl CoA by the dedicated CoA ligase str10. Benzoyl CoA forms the starter unit for the highly reducing polyketide synthase stpks1 that produces the polyketide prestrobilutin A. The FAD-dependent oxygenase str9 then catalyzes the key oxidative rearrangement responsible for the creation of the beta-methoxyacrylate toxophore. Str9 performs epoxidation of the 2,3 olefin of prestrobilutin A, followed by Meinwald rearrangement to furnish the aldehyde intermediate. Rapid enolization of the aldehyde intermediate would give the beta-methoxyacrylate skeleton and methylations catalyzed by str2 and str3 complete the synthesis and lead to the production of strobilurin A. The short-chain dehydrogenase stl2 and the dehydrogenase str4 play a role in the shunt pathway leading to the production of bolineol. The cluster encodes no obvious halogenase gene that could be involved in production of strobilurin B, nor any obvious dimethylallyl-transferase that could be involved in the production of strobilurin G. It is possible that unknown proteins encoded in, or near, the cluster (such as str1 or stl1) may form new classes of halogenases or dimethylally-transferases, or that the responsible genes are located elsewhere on the genome. Similarly, proteins encoded by str5/str6 hydrolases appear to have no chemical role in the biosynthesis of strobilurin A. Finally, no obvious self-resistance gene is found within the cluster. In Strobilurus tenacellus, this protein is FAD-dependent monooxygenase str9.